We begin with the raw amino-acid sequence, 240 residues long: ATP synthase subunit a 1 (240 aa).

5 helical membrane passes run Gly23–Ala43, Val82–Phe102, Asp120–Phe140, Leu186–Leu206, and Gly207–His227.

This sequence belongs to the ATPase A chain family. In terms of assembly, F-type ATPases have 2 components, CF(1) - the catalytic core - and CF(0) - the membrane proton channel. CF(1) has five subunits: alpha(3), beta(3), gamma(1), delta(1), epsilon(1). CF(0) has four main subunits: a, b, b' and c.

The protein localises to the cellular thylakoid membrane. Key component of the proton channel; it plays a direct role in the translocation of protons across the membrane. The protein is ATP synthase subunit a 1 of Acaryochloris marina (strain MBIC 11017).